A 790-amino-acid polypeptide reads, in one-letter code: Threonine--tRNA ligase 2, cytoplasmic (790 aa).

N-acetylalanine is present on A2. A coiled-coil region spans residues 13–68; it reads SRLQRQEEDIRWLCAEVQRLRDEQLRGPERGQAEGPRLTREVAQLQAENRDLHQRL. Residues 80–117 are disordered; that stretch reads RTEAGRAAAHEPPTQNQEKDTKKKRLKQSEPGREVKQP. Over residues 96–117 the composition is skewed to basic and acidic residues; sequence QEKDTKKKRLKQSEPGREVKQP. The region spanning 148-210 is the TGS domain; the sequence is NVISVRVAGG…EGDSTVELLM (63 aa). S441 is subject to Phosphoserine. A Nuclear localization signal motif is present at residues 774–780; that stretch reads KLKNLKK.

It belongs to the class-II aminoacyl-tRNA synthetase family. In terms of assembly, may be a component of the multisynthetase complex (MSC), a large multi-subunit complex which contains at least eight different aminoacyl-tRNA synthetases plus three auxillary subunits AIMP1, AIMP2 and EEF1E1. Interacts with the MSC components EPRS1, AIMP1, AIMP2 and KARS1. As to expression, ubiquitous (at protein level). Strongly expressed in muscle (at protein level). Moderately expressed in heart and liver (at protein level). Weakly expressed in stomach, kidney, testis, spleen, brain, fat and lung (at protein level).

It is found in the cytoplasm. Its subcellular location is the nucleus. It catalyses the reaction tRNA(Thr) + L-threonine + ATP = L-threonyl-tRNA(Thr) + AMP + diphosphate + H(+). Its function is as follows. Catalyzes the attachment of threonine to tRNA(Thr) in a two-step reaction: threonine is first activated by ATP to form Thr-AMP and then transferred to the acceptor end of tRNA(Thr). Also edits incorrectly charged tRNA(Thr) via its editing domain, at the post-transfer stage. This chain is Threonine--tRNA ligase 2, cytoplasmic (Tars3), found in Mus musculus (Mouse).